The chain runs to 369 residues: D-glucosaminate-6-phosphate ammonia lyase (369 aa).

K213 bears the N6-(pyridoxal phosphate)lysine mark.

This sequence belongs to the SelA family. It depends on pyridoxal 5'-phosphate as a cofactor.

It carries out the reaction 2-amino-2-deoxy-D-gluconate 6-phosphate = 2-dehydro-3-deoxy-6-phospho-D-gluconate + NH4(+). Involved in the catabolism of D-glucosaminate. Catalyzes the conversion of D-glucosaminate 6-phosphate to yield keto-3-deoxygluconate 6-phosphate (KDGP). The sequence is that of D-glucosaminate-6-phosphate ammonia lyase from Salmonella typhimurium (strain 14028s / SGSC 2262).